Consider the following 111-residue polypeptide: Probable 4-amino-4-deoxy-L-arabinose-phosphoundecaprenol flippase subunit ArnE (111 aa).

Helical transmembrane passes span 38–58, 61–81, and 91–111; these read LWLGLALICMGAAMVLWLLVL, LPVGIAYPMLSLNFVWVTLAA, and PRHWFGVALIISGIIILGSAA. Residues 40–109 enclose the EamA domain; that stretch reads LGLALICMGA…IISGIIILGS (70 aa).

Belongs to the ArnE family. Heterodimer of ArnE and ArnF.

The protein resides in the cell inner membrane. It functions in the pathway bacterial outer membrane biogenesis; lipopolysaccharide biosynthesis. Functionally, translocates 4-amino-4-deoxy-L-arabinose-phosphoundecaprenol (alpha-L-Ara4N-phosphoundecaprenol) from the cytoplasmic to the periplasmic side of the inner membrane. This is Probable 4-amino-4-deoxy-L-arabinose-phosphoundecaprenol flippase subunit ArnE from Salmonella enteritidis PT4 (strain P125109).